We begin with the raw amino-acid sequence, 177 residues long: ATP synthase subunit delta (177 aa).

The protein belongs to the ATPase delta chain family. F-type ATPases have 2 components, F(1) - the catalytic core - and F(0) - the membrane proton channel. F(1) has five subunits: alpha(3), beta(3), gamma(1), delta(1), epsilon(1). F(0) has three main subunits: a(1), b(2) and c(10-14). The alpha and beta chains form an alternating ring which encloses part of the gamma chain. F(1) is attached to F(0) by a central stalk formed by the gamma and epsilon chains, while a peripheral stalk is formed by the delta and b chains.

The protein resides in the cell inner membrane. Its function is as follows. F(1)F(0) ATP synthase produces ATP from ADP in the presence of a proton or sodium gradient. F-type ATPases consist of two structural domains, F(1) containing the extramembraneous catalytic core and F(0) containing the membrane proton channel, linked together by a central stalk and a peripheral stalk. During catalysis, ATP synthesis in the catalytic domain of F(1) is coupled via a rotary mechanism of the central stalk subunits to proton translocation. This protein is part of the stalk that links CF(0) to CF(1). It either transmits conformational changes from CF(0) to CF(1) or is implicated in proton conduction. In Neisseria meningitidis serogroup B (strain ATCC BAA-335 / MC58), this protein is ATP synthase subunit delta.